The sequence spans 299 residues: Acetaldehyde dehydrogenase (299 aa).

Residue 11–14 (SGNI) coordinates NAD(+). C126 serves as the catalytic Acyl-thioester intermediate. Residues 157-165 (SAGPGTRAN) and N267 contribute to the NAD(+) site.

It belongs to the acetaldehyde dehydrogenase family.

It catalyses the reaction acetaldehyde + NAD(+) + CoA = acetyl-CoA + NADH + H(+). The sequence is that of Acetaldehyde dehydrogenase from Bacillus cereus (strain ATCC 10987 / NRS 248).